The chain runs to 585 residues: MKPSKSHHKEKTARRREEKLEESDNPKYRDRAKERRENQNPDYDPSELSSFHAVAPPGAVDIRAADALKISIENSKYLGGDVEHTHLVKGLDYALLNKVRSEIVKKPDGEDGDGGKTSAPKEDQRVTFRTIAAKSVYQWIVKPQTIIKSNEMFLPGRMTFVYDMEGGYTHDIPTTLYRSKADCPVPEEFVTVNVDGSVLDRIAKIMSYLRLGSSGKVLKKKKKEKDGKGKMSTIANDYDEDDNKSKIENGSSVNISDREVLPPPPPLPPGINHLDLSTKQEEPPVARTDDDDIFVGEGVDYTVPGKDVTQSPISEDMEESPRDKEKVSYFDEPAYGPVQEKVPYFAEPAYGPVQPSAGQEWQDMSAYGAMQTQGLAPGYPGEWQEYQYAEQTGYQEQYLQPGMEGYEVQPETDVLLDPQLMSQEEKDRGLGSVFKRDDQRLQQLRESDAREKDPTFVSESYSECYPGYQEYNHEIVGSDEEPDLSKMDMGGKAKGGLHRWDFETEEEWEKYNEQKEAMPKAAFQFGVKMQDGRKTRKQNRDRDQKLNNELHQINKILTRKKMEKEGGDVASLDAAEAQTPKRSKH.

Residues 1 to 14 (MKPSKSHHKEKTAR) are compositionally biased toward basic residues. Disordered regions lie at residues 1–52 (MKPS…SSFH) and 219–324 (KKKK…PRDK). Residues 15-39 (RREEKLEESDNPKYRDRAKERRENQ) show a composition bias toward basic and acidic residues. 4 R-[ED] repeats span residues 16 to 17 (RE), 29 to 30 (RD), 36 to 37 (RE), and 258 to 259 (RE). Basic and acidic residues predominate over residues 276–288 (LSTKQEEPPVART). R-[ED] repeat units follow at residues 322-323 (RD), 436-437 (RD), 445-446 (RE), 450-451 (RE), 540-541 (RD), and 542-543 (RD). Positions 523–585 (FQFGVKMQDG…EAQTPKRSKH (63 aa)) are disordered. The segment covering 530–548 (QDGRKTRKQNRDRDQKLNN) has biased composition (basic and acidic residues). The residue at position 579 (T579) is a Phosphothreonine.

It belongs to the RED family. Component of the spliceosome. Interacts with SMU1. Highly expressed in seedlings at 7 days after germination, young flowers before anthesis and developing siliques. Expressed at lower levels in roots, expanding leaves, open flowers, dry seeds and inflorescences. Not detected in senescing leaves.

It localises to the nucleus. In terms of biological role, auxiliary spliceosomal protein involved in splicing of specific pre-mRNAs that affect multiple aspects of development. This chain is Suppressor of mec-8 and unc-52 protein homolog 2 (SMU2), found in Arabidopsis thaliana (Mouse-ear cress).